Reading from the N-terminus, the 1097-residue chain is DNA-directed RNA polymerase subunit beta (1097 aa).

The segment at 1072–1097 (QDVNPRRSTPSRPTYESLGVADYDED) is disordered.

It belongs to the RNA polymerase beta chain family. As to quaternary structure, in cyanobacteria the RNAP catalytic core is composed of 2 alpha, 1 beta, 1 beta', 1 gamma and 1 omega subunit. When a sigma factor is associated with the core the holoenzyme is formed, which can initiate transcription.

The catalysed reaction is RNA(n) + a ribonucleoside 5'-triphosphate = RNA(n+1) + diphosphate. DNA-dependent RNA polymerase catalyzes the transcription of DNA into RNA using the four ribonucleoside triphosphates as substrates. The protein is DNA-directed RNA polymerase subunit beta of Synechococcus sp. (strain WH7803).